The chain runs to 430 residues: 3-phosphoshikimate 1-carboxyvinyltransferase (430 aa).

The 3-phosphoshikimate site is built by Lys-20, Ser-21, and Arg-25. Lys-20 is a binding site for phosphoenolpyruvate. Positions 92 and 120 each coordinate phosphoenolpyruvate. Ser-166, Gln-168, Asp-312, and Lys-339 together coordinate 3-phosphoshikimate. Gln-168 lines the phosphoenolpyruvate pocket. The active-site Proton acceptor is the Asp-312. The phosphoenolpyruvate site is built by Arg-343 and Arg-387.

It belongs to the EPSP synthase family. Monomer.

It localises to the cytoplasm. The enzyme catalyses 3-phosphoshikimate + phosphoenolpyruvate = 5-O-(1-carboxyvinyl)-3-phosphoshikimate + phosphate. Its pathway is metabolic intermediate biosynthesis; chorismate biosynthesis; chorismate from D-erythrose 4-phosphate and phosphoenolpyruvate: step 6/7. Functionally, catalyzes the transfer of the enolpyruvyl moiety of phosphoenolpyruvate (PEP) to the 5-hydroxyl of shikimate-3-phosphate (S3P) to produce enolpyruvyl shikimate-3-phosphate and inorganic phosphate. This Lactococcus lactis subsp. cremoris (strain SK11) protein is 3-phosphoshikimate 1-carboxyvinyltransferase.